The primary structure comprises 342 residues: Anthranilate phosphoribosyltransferase (342 aa).

5-phospho-alpha-D-ribose 1-diphosphate-binding positions include glycine 83, 86 to 87 (GD), threonine 91, 93 to 96 (NIST), 111 to 119 (KHGGRSVSS), and alanine 123. Glycine 83 is a binding site for anthranilate. Serine 95 is a Mg(2+) binding site. Position 169 (arginine 169) interacts with anthranilate. Mg(2+) is bound by residues aspartate 228 and glutamate 229.

It belongs to the anthranilate phosphoribosyltransferase family. In terms of assembly, homodimer. Mg(2+) is required as a cofactor.

It carries out the reaction N-(5-phospho-beta-D-ribosyl)anthranilate + diphosphate = 5-phospho-alpha-D-ribose 1-diphosphate + anthranilate. It functions in the pathway amino-acid biosynthesis; L-tryptophan biosynthesis; L-tryptophan from chorismate: step 2/5. Functionally, catalyzes the transfer of the phosphoribosyl group of 5-phosphorylribose-1-pyrophosphate (PRPP) to anthranilate to yield N-(5'-phosphoribosyl)-anthranilate (PRA). This chain is Anthranilate phosphoribosyltransferase, found in Neisseria gonorrhoeae (strain ATCC 700825 / FA 1090).